Here is a 240-residue protein sequence, read N- to C-terminus: MATAMYLEHYLDSIENLPCELQRNFQLMRELDQRTEDKKAEIDILAAEYISTVKTLSSAQRVEHLQKIQSAYSKCKEYSDDKVQLAMQTYEMVDKHIRRLDADLARFEADLKDRMDGSDFESTGARSLKKGRSQKEKRSSRGRGRRTSEEDTPKKKKHKSGSEFTDSILSVHPSDVLDMPVDPNEPTYCLCHQVSYGEMIGCDNPDCPIEWFHFACVDLTTKPKGKWFCPRCVQEKRKKK.

Positions 115-165 are disordered; sequence MDGSDFESTGARSLKKGRSQKEKRSSRGRGRRTSEEDTPKKKKHKSGSEFT. Serine 118 carries the post-translational modification Phosphoserine. Arginine 126 bears the Omega-N-methylarginine mark. The segment at 186–235 adopts a PHD-type zinc-finger fold; it reads PTYCLCHQVSYGEMIGCDNPDCPIEWFHFACVDLTTKPKGKWFCPRCVQE. Zn(2+)-binding residues include cysteine 189, cysteine 191, cysteine 202, cysteine 207, histidine 213, cysteine 216, cysteine 229, and cysteine 232.

This sequence belongs to the ING family. Component of the HBO1 complex composed of KAT7/HBO1, MEAF6, ING5, and one scaffold subunit: complexes containing BRPF scaffold (BRPF1, BRD1/BRPF2 or BRPF3) direct KAT7/HBO1 specificity towards H3K14ac, while complexes containing JADE scaffold (JADE1, JADE2 and JADE3) mediate acetylation of histone H4. Component of the MOZ/MORF complex composed at least of ING5, KAT6A, KAT6B, MEAF6 and one of BRPF1, BRD1/BRPF2 and BRPF3. Interacts with H3K4me3 and to a lesser extent with H3K4me2. Interacts with EP300 and p53/TP53. Interacts with INCA1.

The protein resides in the nucleus. Its subcellular location is the chromosome. Functionally, component of the HBO1 complex, which specifically mediates acetylation of histone H3 at 'Lys-14' (H3K14ac) and, to a lower extent, acetylation of histone H4. Component of the MOZ/MORF complex which has a histone H3 acetyltransferase activity. Through chromatin acetylation it may regulate DNA replication and may function as a transcriptional coactivator. Inhibits cell growth, induces a delay in S-phase progression and enhances Fas-induced apoptosis in an INCA1-dependent manner. In Mus musculus (Mouse), this protein is Inhibitor of growth protein 5 (Ing5).